The following is a 1023-amino-acid chain: 1-phosphatidylinositol 4,5-bisphosphate phosphodiesterase beta-4 (1023 aa).

The region spanning Gln-149–Gln-299 is the PI-PLC X-box domain. Catalysis depends on residues His-164 and His-211. Positions Leu-413 to Arg-529 constitute a PI-PLC Y-box domain. One can recognise a C2 domain in the interval Asp-532–Leu-657. Disordered stretches follow at residues Ala-711–Arg-742 and Lys-930–Leu-958. 2 stretches are compositionally biased toward polar residues: residues Ala-729–Arg-742 and Met-933–Asp-942. Phosphothreonine is present on Thr-734. Residues Lys-943 to Glu-957 are compositionally biased toward basic and acidic residues.

Ca(2+) serves as cofactor. In terms of processing, the N-terminus is blocked. Preferentially expressed in the retina.

It is found in the cell membrane. The catalysed reaction is a 1,2-diacyl-sn-glycero-3-phospho-(1D-myo-inositol-4,5-bisphosphate) + H2O = 1D-myo-inositol 1,4,5-trisphosphate + a 1,2-diacyl-sn-glycerol + H(+). It catalyses the reaction a 1,2-diacyl-sn-glycero-3-phospho-(1D-myo-inositol) + H2O = 1D-myo-inositol 1-phosphate + a 1,2-diacyl-sn-glycerol + H(+). Activated phosphatidylinositol-specific phospholipase C enzymes catalyze the production of the second messenger molecules diacylglycerol (DAG) and inositol 1,4,5-trisphosphate (IP3) involved in G-protein coupled receptor signaling pathways. PLCB4 is a direct effector of the endothelin receptor signaling pathway that plays an essential role in lower jaw and middle ear structures development. This is 1-phosphatidylinositol 4,5-bisphosphate phosphodiesterase beta-4 (PLCB4) from Bos taurus (Bovine).